The chain runs to 100 residues: Small ribosomal subunit protein uS14 (100 aa).

It belongs to the universal ribosomal protein uS14 family. In terms of assembly, part of the 30S ribosomal subunit. Contacts proteins S3 and S10.

Its function is as follows. Binds 16S rRNA, required for the assembly of 30S particles and may also be responsible for determining the conformation of the 16S rRNA at the A site. The chain is Small ribosomal subunit protein uS14 from Prochlorococcus marinus (strain MIT 9211).